We begin with the raw amino-acid sequence, 334 residues long: Holliday junction branch migration complex subunit RuvB (334 aa).

The tract at residues 4-186 is large ATPase domain (RuvB-L); the sequence is ADRLIAPISN…FGIVQRLEYY (183 aa). Residues I25, R26, G67, K70, T71, T72, 133-135, R176, Y186, and R223 each bind ATP; that span reads EDY. T71 is a Mg(2+) binding site. The segment at 187-257 is small ATPAse domain (RuvB-S); it reads KVADLQHIVQ…TADRALNMLD (71 aa). Positions 260 to 334 are head domain (RuvB-H); the sequence is HQGFDYMDRK…RAYLHFGIEK (75 aa). DNA contacts are provided by R315 and R320.

Belongs to the RuvB family. As to quaternary structure, homohexamer. Forms an RuvA(8)-RuvB(12)-Holliday junction (HJ) complex. HJ DNA is sandwiched between 2 RuvA tetramers; dsDNA enters through RuvA and exits via RuvB. An RuvB hexamer assembles on each DNA strand where it exits the tetramer. Each RuvB hexamer is contacted by two RuvA subunits (via domain III) on 2 adjacent RuvB subunits; this complex drives branch migration. In the full resolvosome a probable DNA-RuvA(4)-RuvB(12)-RuvC(2) complex forms which resolves the HJ.

It is found in the cytoplasm. The enzyme catalyses ATP + H2O = ADP + phosphate + H(+). Its function is as follows. The RuvA-RuvB-RuvC complex processes Holliday junction (HJ) DNA during genetic recombination and DNA repair, while the RuvA-RuvB complex plays an important role in the rescue of blocked DNA replication forks via replication fork reversal (RFR). RuvA specifically binds to HJ cruciform DNA, conferring on it an open structure. The RuvB hexamer acts as an ATP-dependent pump, pulling dsDNA into and through the RuvAB complex. RuvB forms 2 homohexamers on either side of HJ DNA bound by 1 or 2 RuvA tetramers; 4 subunits per hexamer contact DNA at a time. Coordinated motions by a converter formed by DNA-disengaged RuvB subunits stimulates ATP hydrolysis and nucleotide exchange. Immobilization of the converter enables RuvB to convert the ATP-contained energy into a lever motion, pulling 2 nucleotides of DNA out of the RuvA tetramer per ATP hydrolyzed, thus driving DNA branch migration. The RuvB motors rotate together with the DNA substrate, which together with the progressing nucleotide cycle form the mechanistic basis for DNA recombination by continuous HJ branch migration. Branch migration allows RuvC to scan DNA until it finds its consensus sequence, where it cleaves and resolves cruciform DNA. This chain is Holliday junction branch migration complex subunit RuvB, found in Vibrio cholerae serotype O1 (strain ATCC 39541 / Classical Ogawa 395 / O395).